A 104-amino-acid chain; its full sequence is UPF0235 protein M446_3939 (104 aa).

It belongs to the UPF0235 family.

The chain is UPF0235 protein M446_3939 from Methylobacterium sp. (strain 4-46).